Reading from the N-terminus, the 468-residue chain is Immunoglobulin superfamily member 21 (468 aa).

Positions 1–24 (MRAAPSLRRASCLLLAAILDLARG) are cleaved as a signal peptide. Ig-like domains follow at residues 25-132 (YLTV…VVLA) and 344-429 (PKIM…TRLI). Cys-46 and Cys-116 are joined by a disulfide.

Interacts (Ig-like 1 domain) with NRXN2 (via Laminin G-like 1 domain) in a trans-interaction manner. As to expression, expressed in brain.

The protein localises to the postsynaptic cell membrane. Involved in synaptic inhibition in the brain. Selectively regulates inhibitory presynaptic differentiation through interacting with presynaptic NRXN2. This is Immunoglobulin superfamily member 21 from Rattus norvegicus (Rat).